The primary structure comprises 95 residues: Endoribonuclease VapD homolog (95 aa).

It belongs to the VapD ribonuclease family. In terms of assembly, homodimer.

Cleaves ssRNA, mostly between U:A. In Helicobacter pylori (strain ATCC 700392 / 26695) (Campylobacter pylori), this protein is Endoribonuclease VapD homolog.